Consider the following 530-residue polypeptide: Berberine bridge enzyme-like 22 (530 aa).

The first 22 residues, Met-1–Ser-22, serve as a signal peptide directing secretion. Residues Cys-32 and Cys-99 are joined by a disulfide bond. N-linked (GlcNAc...) asparagine glycosylation is found at Asn-39, Asn-47, Asn-68, Asn-75, Asn-141, and Asn-486. Residues Thr-77 to Val-251 form the FAD-binding PCMH-type domain. A cross-link (6-(S-cysteinyl)-8alpha-(pros-histidyl)-FAD (His-Cys)) is located at residues His-114–Cys-176.

This sequence belongs to the oxygen-dependent FAD-linked oxidoreductase family. FAD serves as cofactor. Post-translationally, the FAD cofactor is bound via a bicovalent 6-S-cysteinyl, 8alpha-N1-histidyl FAD linkage. Accumulates in cell walls of etiolated hypocotyls.

It localises to the secreted. Its subcellular location is the cell wall. The chain is Berberine bridge enzyme-like 22 from Arabidopsis thaliana (Mouse-ear cress).